We begin with the raw amino-acid sequence, 355 residues long: 6-aminohexanoate-oligomer endohydrolase (355 aa).

The Nucleophile role is filled by Thr267.

Belongs to the peptidase S58 family. In terms of assembly, heterotetramer composed of 4 alpha/beta heterodimers. Expressed as an inactive precursor that is cleaved autocatalytically at Asn266/Thr267 to generate an active enzyme composed of an alpha subunit and a beta subunit.

The enzyme catalyses [N-(6-aminohexanoyl)]n + H2O = [N-(6-aminohexanoyl)]n-x + [N-(6-aminohexanoyl)]x.. Its pathway is xenobiotic degradation; nylon-6 oligomer degradation. Its function is as follows. Involved in the degradation of nylon-6 oligomers. Degrades cyclic and linear oligomers of 6-aminohexanoate (Ahx) with a degree of polymerization greater than three by an endo-type mode. Cannot use Ahx cyclic dimer or the Ahx linear dimer. The protein is 6-aminohexanoate-oligomer endohydrolase of Agromyces sp. (strain KY5R).